A 748-amino-acid chain; its full sequence is Pleckstrin homology domain-containing family M member 3 (748 aa).

Disordered regions lie at residues 88–107 (HAKEQNESTKRTYSDDPLLS) and 129–187 (NDSL…RNKN). Basic and acidic residues-rich tracts occupy residues 129-140 (NDSLDHLEDAPK) and 148-159 (SRSDVSHIDWKN). Positions 167–180 (QRSSSQGMHCTSPF) are enriched in polar residues. 2 consecutive PH domains span residues 200-297 (NILK…EAIC) and 348-443 (NIIK…SAAN). The segment at 656–709 (SHVYSCSLCSQKGFICEICNNGEILYPFEENSTSRCENCGAVFHSDCKVRTVPC) adopts a Phorbol-ester/DAG-type zinc-finger fold.

It localises to the cytoplasm. The protein localises to the golgi apparatus. It is found in the cell membrane. Functionally, may play a role during muscle differentiation. In Xenopus laevis (African clawed frog), this protein is Pleckstrin homology domain-containing family M member 3 (plekhm3).